Consider the following 520-residue polypeptide: DDB1- and CUL4-associated factor 17 (520 aa).

The next 2 membrane-spanning stretches (helical) occupy residues 186 to 206 and 222 to 242; these read VLLY…ILEI and GILI…QTIA.

Interacts with DDB1, CUL4A and CUL4B. In terms of tissue distribution, ubiquitously expressed.

It localises to the membrane. Its subcellular location is the nucleus. It is found in the nucleolus. It participates in protein modification; protein ubiquitination. May function as a substrate receptor for CUL4-DDB1 E3 ubiquitin-protein ligase complex. This chain is DDB1- and CUL4-associated factor 17 (DCAF17), found in Homo sapiens (Human).